A 188-amino-acid chain; its full sequence is Elongation factor P (188 aa).

This sequence belongs to the elongation factor P family.

It localises to the cytoplasm. The protein operates within protein biosynthesis; polypeptide chain elongation. In terms of biological role, involved in peptide bond synthesis. Stimulates efficient translation and peptide-bond synthesis on native or reconstituted 70S ribosomes in vitro. Probably functions indirectly by altering the affinity of the ribosome for aminoacyl-tRNA, thus increasing their reactivity as acceptors for peptidyl transferase. This Chlorobium phaeobacteroides (strain DSM 266 / SMG 266 / 2430) protein is Elongation factor P.